The chain runs to 88 residues: Putative membrane protein insertion efficiency factor (88 aa).

The protein belongs to the UPF0161 family.

The protein localises to the cell membrane. Its function is as follows. Could be involved in insertion of integral membrane proteins into the membrane. The protein is Putative membrane protein insertion efficiency factor of Exiguobacterium sibiricum (strain DSM 17290 / CCUG 55495 / CIP 109462 / JCM 13490 / 255-15).